The following is a 938-amino-acid chain: Protein translocase subunit SecA (938 aa).

Residues Q90, 108–112, and D504 each bind ATP; that span reads GEGKT.

It belongs to the SecA family. As to quaternary structure, monomer and homodimer. Part of the essential Sec protein translocation apparatus which comprises SecA, SecYEG and auxiliary proteins SecDF. Other proteins may also be involved.

Its subcellular location is the cell inner membrane. The protein resides in the cellular thylakoid membrane. It localises to the cytoplasm. The enzyme catalyses ATP + H2O + cellular proteinSide 1 = ADP + phosphate + cellular proteinSide 2.. Functionally, part of the Sec protein translocase complex. Interacts with the SecYEG preprotein conducting channel. Has a central role in coupling the hydrolysis of ATP to the transfer of proteins into and across the cell membrane, serving as an ATP-driven molecular motor driving the stepwise translocation of polypeptide chains across the membrane. Probably participates in protein translocation into and across both the cytoplasmic and thylakoid membranes in cyanobacterial cells. The sequence is that of Protein translocase subunit SecA from Microcystis aeruginosa (strain NIES-843 / IAM M-2473).